Here is a 546-residue protein sequence, read N- to C-terminus: Chaperonin GroEL (546 aa).

Residues 30–33, 87–91, Gly-414, 477–479, and Asp-493 contribute to the ATP site; these read TLGP, DGTTT, and NAL.

This sequence belongs to the chaperonin (HSP60) family. As to quaternary structure, forms a cylinder of 14 subunits composed of two heptameric rings stacked back-to-back. Interacts with the co-chaperonin GroES.

The protein localises to the cytoplasm. It catalyses the reaction ATP + H2O + a folded polypeptide = ADP + phosphate + an unfolded polypeptide.. Functionally, together with its co-chaperonin GroES, plays an essential role in assisting protein folding. The GroEL-GroES system forms a nano-cage that allows encapsulation of the non-native substrate proteins and provides a physical environment optimized to promote and accelerate protein folding. This chain is Chaperonin GroEL, found in Syntrophomonas wolfei subsp. wolfei (strain DSM 2245B / Goettingen).